The chain runs to 267 residues: RWD domain-containing protein 3 (267 aa).

The RWD domain occupies 7-114 (QELSALAAIF…LWIQQNLRLV (108 aa)). Interaction with UBE2I/UBC9 regions lie at residues 13–15 (AAI) and 100–102 (VHE).

As to quaternary structure, interacts with UBE2I/UBC9, NFKBIA, HIF1A and NCOA2.

It is found in the nucleus. Its subcellular location is the cytoplasm. In terms of biological role, enhancer of SUMO conjugation. Via its interaction with UBE2I/UBC9, increases SUMO conjugation to proteins by promoting the binding of E1 and E2 enzymes, thioester linkage between SUMO and UBE2I/UBC9 and transfer of SUMO to specific target proteins which include HIF1A, PIAS, NFKBIA, NR3C1 and TOP1. Positively regulates the NF-kappa-B signaling pathway by enhancing the sumoylation of NF-kappa-B inhibitor alpha (NFKBIA), promoting its stabilization which consequently leads to an increased inhibition of NF-kappa-B transcriptional activity. Negatively regulates the hypoxia-inducible factor-1 alpha (HIF1A) signaling pathway by increasing the sumoylation of HIF1A, promoting its stabilization, transcriptional activity and the expression of its target gene VEGFA during hypoxia. Has no effect on ubiquitination. The sequence is that of RWD domain-containing protein 3 (Rwdd3) from Mus musculus (Mouse).